We begin with the raw amino-acid sequence, 358 residues long: Probable tartrate dehydrogenase/decarboxylase TtuC' (358 aa).

Mn(2+) is bound by residues aspartate 222, aspartate 246, and aspartate 250.

Belongs to the isocitrate and isopropylmalate dehydrogenases family. Requires Mg(2+) as cofactor. Mn(2+) serves as cofactor. It depends on K(+) as a cofactor.

It is found in the cytoplasm. The enzyme catalyses tartrate + NAD(+) = 2-hydroxy-3-oxosuccinate + NADH + H(+). The catalysed reaction is (2R,3S)-tartrate + NAD(+) = 2-hydroxy-3-oxosuccinate + NADH + H(+). It carries out the reaction (2R,3R)-tartrate + NAD(+) = 2-hydroxy-3-oxosuccinate + NADH + H(+). It catalyses the reaction (2R,3R)-tartrate + H(+) = (R)-glycerate + CO2. The enzyme catalyses (R)-malate + NAD(+) = pyruvate + CO2 + NADH. Its pathway is carbohydrate acid metabolism; tartrate degradation; 2-hydroxy-3-oxosuccinate from L-tartrate: step 1/1. It functions in the pathway carbohydrate acid metabolism; tartrate degradation; 2-hydroxy-3-oxosuccinate from meso-tartrate: step 1/1. It participates in carbohydrate acid metabolism; tartrate degradation; D-glycerate from L-tartrate: step 1/1. Its function is as follows. Has multiple catalytic activities. Apart from catalyzing the oxidation of (+)-tartrate to oxaloglycolate, also converts meso-tartrate to D-glycerate and catalyzes the oxidative decarboxylation of D-malate to pyruvate. The sequence is that of Probable tartrate dehydrogenase/decarboxylase TtuC' (ttuC') from Agrobacterium vitis (Rhizobium vitis).